A 436-amino-acid chain; its full sequence is UPF0597 protein YhaM (436 aa).

The protein belongs to the UPF0597 family.

This chain is UPF0597 protein YhaM, found in Shigella flexneri serotype 5b (strain 8401).